Here is a 133-residue protein sequence, read N- to C-terminus: NAD(P)H-quinone oxidoreductase subunit 3 (133 aa).

The next 3 membrane-spanning stretches (helical) occupy residues 22-44 (YLLG…SRLL), 77-97 (MFAL…PWAV), and 102-122 (LGLL…VGLA).

This sequence belongs to the complex I subunit 3 family. As to quaternary structure, NDH-1 can be composed of about 15 different subunits; different subcomplexes with different compositions have been identified which probably have different functions.

The protein resides in the cellular thylakoid membrane. It carries out the reaction a plastoquinone + NADH + (n+1) H(+)(in) = a plastoquinol + NAD(+) + n H(+)(out). The enzyme catalyses a plastoquinone + NADPH + (n+1) H(+)(in) = a plastoquinol + NADP(+) + n H(+)(out). Functionally, NDH-1 shuttles electrons from an unknown electron donor, via FMN and iron-sulfur (Fe-S) centers, to quinones in the respiratory and/or the photosynthetic chain. The immediate electron acceptor for the enzyme in this species is believed to be plastoquinone. Couples the redox reaction to proton translocation, and thus conserves the redox energy in a proton gradient. Cyanobacterial NDH-1 also plays a role in inorganic carbon-concentration. The protein is NAD(P)H-quinone oxidoreductase subunit 3 of Synechococcus sp. (strain ATCC 27144 / PCC 6301 / SAUG 1402/1) (Anacystis nidulans).